The chain runs to 186 residues: Der GTPase-activating protein YihI (186 aa).

Positions Met1–Thr65 are disordered. 2 stretches are compositionally biased toward basic and acidic residues: residues Arg9–Asn25 and Thr34–Glu45.

Belongs to the YihI family. Interacts with Der.

A GTPase-activating protein (GAP) that modifies Der/EngA GTPase function. May play a role in ribosome biogenesis. The chain is Der GTPase-activating protein YihI from Histophilus somni (strain 129Pt) (Haemophilus somnus).